Here is a 675-residue protein sequence, read N- to C-terminus: Dihydrolipoyllysine-residue acetyltransferase component of pyruvate dehydrogenase complex (675 aa).

Residues 2-77 form the Lipoyl-binding 1 domain; that stretch reads AFSVEMPELG…DVGGVIAIIG (76 aa). K43 bears the N6-lipoyllysine mark. The disordered stretch occupies residues 77–124; sequence GDADETPANEAPADEAPAPAEEEEPVKEEPKKEAAPEAPAATGAATDV. 2 stretches are compositionally biased toward low complexity: residues 84–95 and 112–124; these read ANEAPADEAPAP and PEAPAATGAATDV. The region spanning 121–196 is the Lipoyl-binding 2 domain; it reads ATDVEMPELG…DVGAVIARIG (76 aa). N6-lipoyllysine is present on K162. The segment at 200 to 240 is disordered; it reads AAAAPAEEEAAPAEEEEPVKEEPKKEAAPEAPAATGAATDV. The span at 205–218 shows a compositional bias: acidic residues; that stretch reads AEEEAAPAEEEEPV. Residues 237–312 enclose the Lipoyl-binding 3 domain; the sequence is ATDVEMPELG…DVGAVIARIG (76 aa). The residue at position 278 (K278) is an N6-lipoyllysine. Residues 316–368 form a disordered region; the sequence is AAAAPAEEEAAPAEEEEPVKEEPKKEEPKKEEPKKEAATTPAAASATVSASGD. Positions 321–334 are enriched in acidic residues; the sequence is AEEEAAPAEEEEPV. The span at 335-352 shows a compositional bias: basic and acidic residues; sequence KEEPKKEEPKKEEPKKEA. Over residues 353 to 366 the composition is skewed to low complexity; the sequence is ATTPAAASATVSAS. Residues 372–409 form the Peripheral subunit-binding (PSBD) domain; sequence YVTPLVRKLAEKHGVDLNTVTGTGIGGRIRKQDVLAAA. Residues H645 and D649 contribute to the active site.

This sequence belongs to the 2-oxoacid dehydrogenase family. Forms a 24-polypeptide structural core with octahedral symmetry. Part of an unusual ODH/PDH supercomplex, consisting of AceE (E1), AceF (E2), and Lpd (E3) together with OdhA (E1+E2). (R)-lipoate serves as cofactor.

The enzyme catalyses N(6)-[(R)-dihydrolipoyl]-L-lysyl-[protein] + acetyl-CoA = N(6)-[(R)-S(8)-acetyldihydrolipoyl]-L-lysyl-[protein] + CoA. Its function is as follows. Is essential for both 2-oxoglutarate dehydrogenase (ODH) and pyruvate dehydrogenase (PDH) activities, but AceF has exclusively transacetylase (and no transsuccinylase) activity. The lipoyl residues required for ODH activity are likely provided by AceF. This is Dihydrolipoyllysine-residue acetyltransferase component of pyruvate dehydrogenase complex (aceF) from Corynebacterium glutamicum (strain ATCC 13032 / DSM 20300 / JCM 1318 / BCRC 11384 / CCUG 27702 / LMG 3730 / NBRC 12168 / NCIMB 10025 / NRRL B-2784 / 534).